A 108-amino-acid chain; its full sequence is Cytochrome c (108 aa).

Heme c is bound by residues C19, C22, H23, and M85.

The protein belongs to the cytochrome c family. Post-translationally, binds 1 heme c group covalently per subunit.

It localises to the mitochondrion intermembrane space. Its function is as follows. Electron carrier protein. The oxidized form of the cytochrome c heme group can accept an electron from the heme group of the cytochrome c1 subunit of cytochrome reductase. Cytochrome c then transfers this electron to the cytochrome oxidase complex, the final protein carrier in the mitochondrial electron-transport chain. This Stellaria longipes (Longstalk starwort) protein is Cytochrome c.